Here is a 295-residue protein sequence, read N- to C-terminus: Elongation factor Ts (295 aa).

Residues 79–82 are involved in Mg(2+) ion dislocation from EF-Tu; that stretch reads TDFV.

Belongs to the EF-Ts family.

It localises to the cytoplasm. Associates with the EF-Tu.GDP complex and induces the exchange of GDP to GTP. It remains bound to the aminoacyl-tRNA.EF-Tu.GTP complex up to the GTP hydrolysis stage on the ribosome. In Bacillus cytotoxicus (strain DSM 22905 / CIP 110041 / 391-98 / NVH 391-98), this protein is Elongation factor Ts.